The primary structure comprises 207 residues: Protein TEX261 homolog (207 aa).

The next 4 helical transmembrane spans lie at 2-22 (FLSL…VVCL), 54-74 (IIFL…FSFI), 94-114 (YKFI…FIYF), and 126-146 (IIAI…ISLA).

The protein belongs to the SVP26 family.

Its subcellular location is the membrane. The polypeptide is Protein TEX261 homolog (Dictyostelium discoideum (Social amoeba)).